We begin with the raw amino-acid sequence, 129 residues long: Aspartate 1-decarboxylase (129 aa).

Catalysis depends on Ser25, which acts as the Schiff-base intermediate with substrate; via pyruvic acid. A Pyruvic acid (Ser) modification is found at Ser25. Thr57 lines the substrate pocket. Residue Tyr58 is the Proton donor of the active site. Substrate is bound at residue 73-75; it reads GAA.

Belongs to the PanD family. As to quaternary structure, heterooctamer of four alpha and four beta subunits. Pyruvate is required as a cofactor. Is synthesized initially as an inactive proenzyme, which is activated by self-cleavage at a specific serine bond to produce a beta-subunit with a hydroxyl group at its C-terminus and an alpha-subunit with a pyruvoyl group at its N-terminus.

It localises to the cytoplasm. It catalyses the reaction L-aspartate + H(+) = beta-alanine + CO2. Its pathway is cofactor biosynthesis; (R)-pantothenate biosynthesis; beta-alanine from L-aspartate: step 1/1. Catalyzes the pyruvoyl-dependent decarboxylation of aspartate to produce beta-alanine. The sequence is that of Aspartate 1-decarboxylase from Chlorobium chlorochromatii (strain CaD3).